We begin with the raw amino-acid sequence, 194 residues long: MNDIDKHKKETQTESKNDLNNTTITQNNVSDDCQNQDKINSLKQKILEIKKHISEVKLREQAEIENINKNTKNKIKIIIDTQLENFFRNLIPIIDSLKNIRKDINKYNNIKDNNMIQGIPLILKSLLTVTEKFGLKINNKKGKLFDPKLHTTIPNENCKNINEYYVSEIIQDGYTFHEKIIRKAIVKLSKDKKT.

Residues 1–17 (MNDIDKHKKETQTESKN) show a composition bias toward basic and acidic residues. Residues 1 to 29 (MNDIDKHKKETQTESKNDLNNTTITQNNV) are disordered. The span at 18–29 (DLNNTTITQNNV) shows a compositional bias: polar residues.

It belongs to the GrpE family. As to quaternary structure, homodimer.

Its subcellular location is the cytoplasm. Functionally, participates actively in the response to hyperosmotic and heat shock by preventing the aggregation of stress-denatured proteins, in association with DnaK and GrpE. It is the nucleotide exchange factor for DnaK and may function as a thermosensor. Unfolded proteins bind initially to DnaJ; upon interaction with the DnaJ-bound protein, DnaK hydrolyzes its bound ATP, resulting in the formation of a stable complex. GrpE releases ADP from DnaK; ATP binding to DnaK triggers the release of the substrate protein, thus completing the reaction cycle. Several rounds of ATP-dependent interactions between DnaJ, DnaK and GrpE are required for fully efficient folding. The protein is Protein GrpE 2 of Buchnera aphidicola subsp. Baizongia pistaciae (strain Bp).